A 173-amino-acid polypeptide reads, in one-letter code: MTVLDIVTYPADVLKDGALPVANIDGKLQQLIDDMAQTMYAHQGVGLAAVQVDSGLRLVIYDVSDQREKQQFRVVINPEVVAVDGECVSEQEGCLSVPELRTDVKRAATVRVEGVDREGRPLVIDAEGLEAIVLQHEIDHLNGTLILDRASRLKRELYKRKVQKRIKQAWQET.

The Fe cation site is built by C94 and H136. E137 is an active-site residue. H140 contributes to the Fe cation binding site.

It belongs to the polypeptide deformylase family. The cofactor is Fe(2+).

The catalysed reaction is N-terminal N-formyl-L-methionyl-[peptide] + H2O = N-terminal L-methionyl-[peptide] + formate. Its function is as follows. Removes the formyl group from the N-terminal Met of newly synthesized proteins. Requires at least a dipeptide for an efficient rate of reaction. N-terminal L-methionine is a prerequisite for activity but the enzyme has broad specificity at other positions. The chain is Peptide deformylase from Desulfosudis oleivorans (strain DSM 6200 / JCM 39069 / Hxd3) (Desulfococcus oleovorans).